The following is a 293-amino-acid chain: N-acetylmannosamine kinase (293 aa).

Residues 5 to 12 (AIDIGGTK) and 133 to 140 (GVGGGLVI) each bind ATP. 4 residues coordinate Zn(2+): H157, C167, C169, and C174.

It belongs to the ROK (NagC/XylR) family. NanK subfamily. As to quaternary structure, homodimer.

The catalysed reaction is an N-acyl-D-mannosamine + ATP = an N-acyl-D-mannosamine 6-phosphate + ADP + H(+). Its pathway is amino-sugar metabolism; N-acetylneuraminate degradation; D-fructose 6-phosphate from N-acetylneuraminate: step 2/5. In terms of biological role, catalyzes the phosphorylation of N-acetylmannosamine (ManNAc) to ManNAc-6-P. The chain is N-acetylmannosamine kinase from Vibrio vulnificus (strain CMCP6).